The chain runs to 335 residues: Karyogamy protein KAR4 (335 aa).

The segment at 1-25 (MAFQDPTYDQNKSRHINNSHLQGPN) is disordered. The span at 16-25 (INNSHLQGPN) shows a compositional bias: polar residues.

It belongs to the MT-A70-like family. As to quaternary structure, component of the MIS (mRNA N6-methyladenosine (m6A) methylation) complex, at least composed of IME4, KAR4, MUM2, SLZ1, and VIR1. Interacts with VIR1.

The protein localises to the nucleus. The protein resides in the cytoplasm. Component of the MIS complex, a complex that mediates N6-methyladenosine (m6A) methylation of meiotic mRNAs and is required for initiation of meiosis, progression through the meiotic divisions and sporulation. May assist STE12 in the pheromone-dependent expression of KAR3 and CIK1. The protein is Karyogamy protein KAR4 (KAR4) of Saccharomyces cerevisiae (strain ATCC 204508 / S288c) (Baker's yeast).